The sequence spans 57 residues: UPF0391 membrane protein RPA3029 (57 aa).

2 helical membrane-spanning segments follow: residues 6–26 (WALI…TGIS) and 35–55 (ILFY…FTIF).

The protein belongs to the UPF0391 family.

It localises to the cell membrane. This Rhodopseudomonas palustris (strain ATCC BAA-98 / CGA009) protein is UPF0391 membrane protein RPA3029.